The following is a 364-amino-acid chain: Paraneoplastic antigen Ma2 homolog (364 aa).

Ala2 is modified (N-acetylalanine). The segment covering 335-353 (EEEEASFENESIEEPEEGD) has biased composition (acidic residues). A disordered region spans residues 335–364 (EEEEASFENESIEEPEEGDGYGGWNHEGDD). The segment covering 354 to 364 (GYGGWNHEGDD) has biased composition (gly residues).

This sequence belongs to the PNMA family.

Its subcellular location is the nucleus. It localises to the nucleolus. In Macaca fascicularis (Crab-eating macaque), this protein is Paraneoplastic antigen Ma2 homolog (PNMA2).